The following is a 465-amino-acid chain: Cysteine--tRNA ligase (465 aa).

A Zn(2+)-binding site is contributed by Cys-27. Residues 29 to 39 carry the 'HIGH' region motif; that stretch reads PTVYDDAHLGH. Residues Cys-207, His-237, and Glu-241 each contribute to the Zn(2+) site. Residues 269–273 carry the 'KMSKS' region motif; that stretch reads KMSKS. Lys-272 provides a ligand contact to ATP.

It belongs to the class-I aminoacyl-tRNA synthetase family. Monomer. Requires Zn(2+) as cofactor.

Its subcellular location is the cytoplasm. The enzyme catalyses tRNA(Cys) + L-cysteine + ATP = L-cysteinyl-tRNA(Cys) + AMP + diphosphate. In Helicobacter pylori (strain P12), this protein is Cysteine--tRNA ligase.